An 85-amino-acid chain; its full sequence is uncharacterized protein (85 aa).

Belongs to the ycf76 family.

Its subcellular location is the plastid. It is found in the chloroplast. This is an uncharacterized protein from Zea mays (Maize).